The primary structure comprises 318 residues: Methionyl-tRNA formyltransferase (318 aa).

Residue 112 to 115 (SILP) coordinates (6S)-5,6,7,8-tetrahydrofolate.

The protein belongs to the Fmt family.

It catalyses the reaction L-methionyl-tRNA(fMet) + (6R)-10-formyltetrahydrofolate = N-formyl-L-methionyl-tRNA(fMet) + (6S)-5,6,7,8-tetrahydrofolate + H(+). In terms of biological role, attaches a formyl group to the free amino group of methionyl-tRNA(fMet). The formyl group appears to play a dual role in the initiator identity of N-formylmethionyl-tRNA by promoting its recognition by IF2 and preventing the misappropriation of this tRNA by the elongation apparatus. The chain is Methionyl-tRNA formyltransferase from Shewanella putrefaciens (strain CN-32 / ATCC BAA-453).